We begin with the raw amino-acid sequence, 73 residues long: Translation initiation factor IF-1 (73 aa).

The S1-like domain maps to 1 to 72 (MSKKDVIELE…SRGRIVYRKK (72 aa)).

This sequence belongs to the IF-1 family. Component of the 30S ribosomal translation pre-initiation complex which assembles on the 30S ribosome in the order IF-2 and IF-3, IF-1 and N-formylmethionyl-tRNA(fMet); mRNA recruitment can occur at any time during PIC assembly.

It is found in the cytoplasm. Its function is as follows. One of the essential components for the initiation of protein synthesis. Stabilizes the binding of IF-2 and IF-3 on the 30S subunit to which N-formylmethionyl-tRNA(fMet) subsequently binds. Helps modulate mRNA selection, yielding the 30S pre-initiation complex (PIC). Upon addition of the 50S ribosomal subunit IF-1, IF-2 and IF-3 are released leaving the mature 70S translation initiation complex. The chain is Translation initiation factor IF-1 from Fusobacterium nucleatum subsp. nucleatum (strain ATCC 25586 / DSM 15643 / BCRC 10681 / CIP 101130 / JCM 8532 / KCTC 2640 / LMG 13131 / VPI 4355).